Here is a 60-residue protein sequence, read N- to C-terminus: UPF0434 protein ECA2555 (60 aa).

Belongs to the UPF0434 family.

This chain is UPF0434 protein ECA2555, found in Pectobacterium atrosepticum (strain SCRI 1043 / ATCC BAA-672) (Erwinia carotovora subsp. atroseptica).